We begin with the raw amino-acid sequence, 471 residues long: Collagenase 3 (471 aa).

Residues 1-19 (MQPGVLAACLLLSWTHCWS) form the signal peptide. Residues 20 to 103 (LPLLNSNEDD…PRCGVPDVGE (84 aa)) constitute a propeptide, activation peptide. Residues 94 to 101 (PRCGVPDV) carry the Cysteine switch motif. C96 provides a ligand contact to Zn(2+). N117 carries an N-linked (GlcNAc...) asparagine glycan. D128 is a Ca(2+) binding site. N-linked (GlcNAc...) asparagine glycosylation is found at N152 and N158. Position 162 (D162) interacts with Ca(2+). Zn(2+)-binding residues include H172 and D174. An interaction with TIMP2 region spans residues 176–246 (YPFDGPSGLL…GALMFPIYTY (71 aa)). Ca(2+)-binding residues include D179, G180, S182, and L184. Residue H187 coordinates Zn(2+). Residues N194, G196, and D198 each coordinate Ca(2+). H200 is a Zn(2+) binding site. Residues D202, D203, and E205 each coordinate Ca(2+). Residue H222 coordinates Zn(2+). E223 is a catalytic residue. 3 residues coordinate Zn(2+): H226, H232, and M240. Positions 263-284 (QSLYGPGDEDPNPKHPKTPDKC) are disordered. An interaction with collagen region spans residues 268–471 (PGDEDPNPKH…VMPTNSLLWC (204 aa)). Basic and acidic residues predominate over residues 273 to 284 (PNPKHPKTPDKC). 4 Hemopexin repeats span residues 281–330 (PDKC…WPEL), 331–377 (PNRI…GFPR), 379–427 (VKKI…FPGI), and 428–471 (GGKV…LLWC). An intrachain disulfide couples C284 to C471. Ca(2+)-binding residues include D291, I293, D335, and A337. Y366 carries the phosphotyrosine; by PKDCC modification. Ca(2+)-binding residues include S383 and A385. Residue N409 is glycosylated (N-linked (GlcNAc...) asparagine). D432 and V434 together coordinate Ca(2+).

Belongs to the peptidase M10A family. Ca(2+) serves as cofactor. Requires Zn(2+) as cofactor. The proenzyme is activated by removal of the propeptide; this cleavage can be effected by other matrix metalloproteinases, such as MMP2, MMP3 and MMP14 and may involve several cleavage steps. Cleavage can also be autocatalytic, after partial maturation by another protease or after treatment with 4-aminophenylmercuric acetate (APMA) (in vitro). In terms of processing, N-glycosylated. Post-translationally, tyrosine phosphorylated by PKDCC/VLK.

The protein localises to the secreted. It localises to the extracellular space. The protein resides in the extracellular matrix. Plays a role in the degradation of extracellular matrix proteins including fibrillar collagen, fibronectin, TNC and ACAN. Cleaves triple helical collagens, including type I, type II and type III collagen, but has the highest activity with soluble type II collagen. Can also degrade collagen type IV, type XIV and type X. May also function by activating or degrading key regulatory proteins, such as TGFB1 and CCN2. Plays a role in wound healing, tissue remodeling, cartilage degradation, bone development, bone mineralization and ossification. Required for normal embryonic bone development and ossification. Plays a role in the healing of bone fractures via endochondral ossification. Plays a role in wound healing, probably by a mechanism that involves proteolytic activation of TGFB1 and degradation of CCN2. Plays a role in keratinocyte migration during wound healing. May play a role in cell migration and in tumor cell invasion. This chain is Collagenase 3 (MMP13), found in Oryctolagus cuniculus (Rabbit).